The primary structure comprises 143 residues: Host transcription reprogramming factor 8 (143 aa).

A signal peptide spans 1-19 (MHTYKFIQIALLFASVALA). Residues 24 to 34 (PSPPNPPPVPQ) are compositionally biased toward pro residues. A disordered region spans residues 24-43 (PSPPNPPPVPQLPNSETKSN). Residues 48-71 (HSCEFCGVVKPSGPAYLEHYHQNH) form a C2H2-type 1 zinc finger. The disordered stretch occupies residues 77-99 (GKLATPSPPNPPPVPTQKVETHA). Residues 82-91 (PSPPNPPPVP) show a composition bias toward pro residues. The C2H2-type 2 zinc finger occupies 103–126 (HGCEWCNKVEPSGPAYIKHYKENH).

The protein localises to the secreted. The protein resides in the host nucleus. Its function is as follows. Probable secreted effector that translocates into the nuclei of host cells to reprogram the expression of targeted genes by binding on effector binding elements in rice. The protein is Host transcription reprogramming factor 8 of Pyricularia oryzae (strain 70-15 / ATCC MYA-4617 / FGSC 8958) (Rice blast fungus).